A 540-amino-acid chain; its full sequence is FAD-binding monooxygenase lolF1 (540 aa).

Residues valine 43–glutamate 46 and aspartate 55–phenylalanine 58 each bind FAD. NADP(+)-binding positions include alanine 53–aspartate 55, threonine 182–glutamine 188, and glutamine 205–serine 206.

The protein belongs to the FAD-binding monooxygenase family. Requires FAD as cofactor.

It functions in the pathway alkaloid biosynthesis. In terms of biological role, FAD-binding monooxygenase; part of the gene cluster that mediates the biosynthesis of loline alkaloids, potent insecticidal agents composed of a pyrrolizidine ring system and an uncommon ether bridge linking carbons 2 and 7. Lolines are structurally differentiated by the various modifications of the L-amino group and include norloline, loline, N-methylloline, N-acetylloline, N-acetylnorloline, and N-formylloline. The first committed step is the condensation of O-acetyl-L-homoserine (derived from L-aspartic acid) and L-proline, probably catalyzed by the gamma-type pyridoxal 5'-phosphate(PLP)-dependent enzyme lolC, to give the diamino diacid, NACPP. Ensuing cyclization, decarboxylation, and acetylation steps yield 1-exo-acetamidopyrrolizidine (AcAP). LolO is required for installation of the ether bridge upon the pathway intermediate, 1-exo-acetamidopyrrolizidine (AcAP). In sequential 2-oxoglutarate- and O(2)-consuming steps, lolO removes hydrogens from C2 and C7 of AcAP to form both carbon-oxygen bonds in N-acetylnorloline (NANL), the precursor to all other lolines. The enzymes lolD, lolE, lolF and lolT have also been proposed to be involved in the ether-bridge installation. Further processing of the exocyclic moiety of NANL by fungal N-acetamidase (LolN), methyltransferase (LolM), and cytochrome P450 (LolP) enzymes, with occasional involvement of a plant acetyltransferase, generates the other known lolines. LolN transforms NANL to norlonine which is monomethylated and dimethylated to respectively lonine and N-methyllonine (NML) by lolM. LolP catalyzes hydroxylation of the methyl group in N-methylloline (NML) and further oxygenation to N-formylloline (NFL). A plant acetyltransferase is responsible for the acetylation of loline to form N-acetylloline (NAL). LolA might interact with aspartate kinase to prevent feedback inhibition of its activity by these end products and thereby promote production of L-homoserine from L-aspartate. The protein is FAD-binding monooxygenase lolF1 of Epichloe uncinata (Endophyte fungus).